A 52-amino-acid polypeptide reads, in one-letter code: Large ribosomal subunit protein bL32c (52 aa).

Belongs to the bacterial ribosomal protein bL32 family.

It localises to the plastid. The protein localises to the chloroplast. The protein is Large ribosomal subunit protein bL32c of Citrus sinensis (Sweet orange).